Here is a 236-residue protein sequence, read N- to C-terminus: Thiol:disulfide interchange protein DsbC (236 aa).

The first 20 residues, 1-20, serve as a signal peptide directing secretion; the sequence is MKKGFMLFTLLAAFSGFAQA. The region spanning 36–231 is the Thioredoxin domain; it reads SSDIQPAPVA…MKEFLDEHQK (196 aa). Intrachain disulfides connect C118-C121 and C161-C183.

Belongs to the thioredoxin family. DsbC subfamily. In terms of assembly, homodimer.

Its subcellular location is the periplasm. Functionally, required for disulfide bond formation in some periplasmic proteins. Acts by transferring its disulfide bond to other proteins and is reduced in the process. DsbC is reoxidized by a yet uncharacterized protein. Also acts as a disulfide isomerase. In Escherichia coli O157:H7, this protein is Thiol:disulfide interchange protein DsbC (dsbC).